The sequence spans 312 residues: Malate dehydrogenase (312 aa).

NAD(+)-binding positions include 7-13 (GAAGGIG) and Asp-34. Positions 81 and 87 each coordinate substrate. NAD(+) contacts are provided by residues Asn-94 and 117–119 (ITN). The substrate site is built by Asn-119 and Arg-153. The active-site Proton acceptor is His-177. Met-227 lines the NAD(+) pocket.

Belongs to the LDH/MDH superfamily. MDH type 1 family. As to quaternary structure, homodimer.

It catalyses the reaction (S)-malate + NAD(+) = oxaloacetate + NADH + H(+). Catalyzes the reversible oxidation of malate to oxaloacetate. This chain is Malate dehydrogenase, found in Shigella dysenteriae serotype 1 (strain Sd197).